The following is a 296-amino-acid chain: Probable endonuclease 4 (296 aa).

Residues H68, H109, E144, D178, H181, H213, D226, H228, and E258 each coordinate Zn(2+).

The protein belongs to the AP endonuclease 2 family. It depends on Zn(2+) as a cofactor.

The enzyme catalyses Endonucleolytic cleavage to 5'-phosphooligonucleotide end-products.. In terms of biological role, endonuclease IV plays a role in DNA repair. It cleaves phosphodiester bonds at apurinic or apyrimidinic (AP) sites, generating a 3'-hydroxyl group and a 5'-terminal sugar phosphate. The sequence is that of Probable endonuclease 4 from Staphylococcus aureus (strain MRSA252).